Consider the following 352-residue polypeptide: N-acetyl-gamma-glutamyl-phosphate reductase (352 aa).

Cys158 is an active-site residue.

It belongs to the NAGSA dehydrogenase family. Type 1 subfamily.

The protein localises to the cytoplasm. The catalysed reaction is N-acetyl-L-glutamate 5-semialdehyde + phosphate + NADP(+) = N-acetyl-L-glutamyl 5-phosphate + NADPH + H(+). It participates in amino-acid biosynthesis; L-arginine biosynthesis; N(2)-acetyl-L-ornithine from L-glutamate: step 3/4. In terms of biological role, catalyzes the NADPH-dependent reduction of N-acetyl-5-glutamyl phosphate to yield N-acetyl-L-glutamate 5-semialdehyde. The chain is N-acetyl-gamma-glutamyl-phosphate reductase from Mycobacterium bovis (strain BCG / Tokyo 172 / ATCC 35737 / TMC 1019).